The primary structure comprises 261 residues: Glucose 1-dehydrogenase (261 aa).

11 to 35 provides a ligand contact to NADP(+); the sequence is VITGSSTGLGKSMAIRFATEKAKVV. Ser-145 contributes to the substrate binding site. Catalysis depends on Tyr-158, which acts as the Proton acceptor.

This sequence belongs to the short-chain dehydrogenases/reductases (SDR) family. As to quaternary structure, homotetramer.

The enzyme catalyses D-glucose + NAD(+) = D-glucono-1,5-lactone + NADH + H(+). The catalysed reaction is D-glucose + NADP(+) = D-glucono-1,5-lactone + NADPH + H(+). The chain is Glucose 1-dehydrogenase from Priestia megaterium (Bacillus megaterium).